Here is a 339-residue protein sequence, read N- to C-terminus: Methionine import ATP-binding protein MetN 2 (339 aa).

Residues 2 to 241 enclose the ABC transporter domain; the sequence is ISFNNVSKLY…PKTKTTQNFV (240 aa). Residue 38–45 coordinates ATP; the sequence is GFSGAGKS.

It belongs to the ABC transporter superfamily. Methionine importer (TC 3.A.1.24) family. The complex is composed of two ATP-binding proteins (MetN), two transmembrane proteins (MetI) and a solute-binding protein (MetQ).

The protein localises to the cell membrane. The enzyme catalyses L-methionine(out) + ATP + H2O = L-methionine(in) + ADP + phosphate + H(+). The catalysed reaction is D-methionine(out) + ATP + H2O = D-methionine(in) + ADP + phosphate + H(+). Part of the ABC transporter complex MetNIQ involved in methionine import. Responsible for energy coupling to the transport system. The polypeptide is Methionine import ATP-binding protein MetN 2 (Bacillus cereus (strain ATCC 14579 / DSM 31 / CCUG 7414 / JCM 2152 / NBRC 15305 / NCIMB 9373 / NCTC 2599 / NRRL B-3711)).